The sequence spans 66 residues: Large ribosomal subunit protein uL29 (66 aa).

It belongs to the universal ribosomal protein uL29 family.

The polypeptide is Large ribosomal subunit protein uL29 (Chelativorans sp. (strain BNC1)).